Consider the following 445-residue polypeptide: Probable D-serine dehydratase (445 aa).

Lys-111 bears the N6-(pyridoxal phosphate)lysine mark.

It belongs to the serine/threonine dehydratase family. DsdA subfamily. It depends on pyridoxal 5'-phosphate as a cofactor.

It carries out the reaction D-serine = pyruvate + NH4(+). The sequence is that of Probable D-serine dehydratase from Burkholderia pseudomallei (strain 1106a).